The following is a 347-amino-acid chain: Protein RecA (347 aa).

67 to 74 contributes to the ATP binding site; sequence GPESSGKT.

The protein belongs to the RecA family.

Its subcellular location is the cytoplasm. Its function is as follows. Can catalyze the hydrolysis of ATP in the presence of single-stranded DNA, the ATP-dependent uptake of single-stranded DNA by duplex DNA, and the ATP-dependent hybridization of homologous single-stranded DNAs. It interacts with LexA causing its activation and leading to its autocatalytic cleavage. This chain is Protein RecA, found in Paenarthrobacter aurescens (strain TC1).